The following is a 20-amino-acid chain: Short cationic peptide-4b (20 aa).

E20 is subject to Glutamic acid 1-amide.

Expressed by the venom gland.

The protein resides in the secreted. This is Short cationic peptide-4b from Cupiennius salei (American wandering spider).